A 321-amino-acid chain; its full sequence is Long form salivary protein D7L1 (321 aa).

The first 17 residues, 1-17, serve as a signal peptide directing secretion; it reads MKLPLLLAIVTTFSVVA. 2 disulfides stabilise this stretch: C34/C71 and C67/C124. W55 lines the leukotriene E4 pocket. Leukotriene E4 contacts are provided by G148 and K167. Cystine bridges form between C175–C210, C191–C319, and C250–C268. Noradrenaline is bound by residues E176, R194, and H207. The noradrenaline site is built by D283 and E286.

This sequence belongs to the PBP/GOBP family. (Microbial infection) Interacts with envelope protein of dengue virus type 2. Saliva (at protein level). Female salivary gland (at protein level). Detected in the head and thorax of the female mosquitoes, where the salivary glands are located. Expressed in the distal-lateral and medial lobes of the female salivary gland but not in the carcass. No or low-level expression in the adult male mosquito tissues.

The protein localises to the secreted. Modulates blood feeding of female mosquitoes on vertebrate species by binding and sequestering different mediators involved in the host response, such as biogenic amines and eicosanoids. Binds serotonin, histamine, leukotriene B4, leukotriene C4, leukotriene D4, leukotriene E4, adrenaline and noradrenaline. Does not bind tryptamine and U-46619, a stable analog of thromboxane A2. Exhibits vasodilating activity. Inhibits agonist-induced platelet aggregation but not blood clotting. Inhibits noradrenaline-induced smooth muscle contraction. Promotes an influx of host neutrophils at the inoculation site. Functionally, (Microbial infection) Probably promotes Plasmodium gallinaceum oocyst development in mosquito midgut. Its function is as follows. (Microbial infection) Exhibits antiviral activity against dengue virus type 2 probably through a direct interaction with dengue virus virions. In Aedes aegypti (Yellowfever mosquito), this protein is Long form salivary protein D7L1 (D7).